We begin with the raw amino-acid sequence, 209 residues long: MSQNSNLMREVRLFENHSEREQMENLSELFAVLNALEHLEKMFSRDHVTADEYKTECFKLIDQYKVTMRLVHGATSIEEFAKKYRLHCPAAIERIREGRPITVKDDQGNVLKHIASIVEQFITFLDSLRLNTRAVDDLYPVLDDLYNAINSTSRVPIDANVTTKVKKWHDRLSSMAATDEISDDEARQMIFDTEGAYQSFQKALNEQKH.

In terms of domain architecture, VPS28 N-terminal spans 1–105 (MSQNSNLMRE…REGRPITVKD (105 aa)). Residues 109–205 (NVLKHIASIV…AYQSFQKALN (97 aa)) enclose the VPS28 C-terminal domain.

The protein belongs to the VPS28 family. As to quaternary structure, component of the ESCRT-I complex (endosomal sorting complex required for transport I).

Its subcellular location is the endosome. Its function is as follows. Component of the ESCRT-I complex, a regulator of vesicular trafficking process. This is Vacuolar protein sorting-associated protein 28 homolog from Caenorhabditis briggsae.